Consider the following 537-residue polypeptide: Probable glucomannan 4-beta-mannosyltransferase 15 (537 aa).

A helical transmembrane segment spans residues 50 to 70 (FIVPLFKCIVVMCLIISLLVF). Aspartate 150 is a catalytic residue. Aspartate 209 and aspartate 211 together coordinate substrate. Aspartate 303 is an active-site residue. The next 4 helical transmembrane spans lie at 382 to 402 (IVVH…SVFL), 418 to 438 (VITL…IFWV), 494 to 514 (EMMM…FGNA), and 515 to 535 (FLYL…VGFV).

This sequence belongs to the glycosyltransferase 2 family. Plant cellulose synthase-like A subfamily.

The protein localises to the golgi apparatus membrane. It carries out the reaction GDP-mannose + (glucomannan)n = GDP + (glucomannan)n+1.. Its function is as follows. Probable mannan synthase which consists of a 4-beta-mannosyltransferase activity on mannan using GDP-mannose. The beta-1,4-mannan product is the backbone for galactomannan synthesis by galactomannan galactosyltransferase. Galactomannan is a noncellulosic polysaccharides of plant cell wall. This is Probable glucomannan 4-beta-mannosyltransferase 15 from Arabidopsis thaliana (Mouse-ear cress).